Consider the following 188-residue polypeptide: Protein Cripto (188 aa).

Residues 1–30 (MDCRKMARFSYSVIWIMAISKVFELGLVAG) form the signal peptide. Positions 78 to 107 (LNRTCCLNGGTCMLGSFCACPPSFYGRNCE) constitute an EGF-like domain. Residue Asn-79 is glycosylated (N-linked (GlcNAc...) asparagine). 6 disulfide bridges follow: Cys-82-Cys-89, Cys-83-Cys-95, Cys-97-Cys-106, Cys-115-Cys-133, Cys-128-Cys-149, and Cys-131-Cys-140. Asp-150 carries GPI-anchor amidated aspartate lipidation. A propeptide spans 151 to 188 (GLVMDEHLVASRTPELPPSARTTTFMLVGICLSIQSYY) (removed in mature form).

It belongs to the EGF-CFC (Cripto-1/FRL1/Cryptic) family. In terms of assembly, interacts with the activin type-1 receptor ACVR1B. The GPI-anchor is attached to the protein in the endoplasmic reticulum and serves to target the protein to the cell surface. There, it is processed by GPI processing phospholipase A2 (TMEM8A), removing an acyl-chain at the sn-2 position of GPI and releasing CRIPTO as a lysophosphatidylinositol-bearing form, which is further cleaved by phospholipase D (GPLD1) into a soluble form. In terms of tissue distribution, preferentially expressed in gastric and colorectal carcinomas than in their normal counterparts. Expressed in breast and lung.

It is found in the cell membrane. The protein resides in the secreted. Its function is as follows. GPI-anchored cell membrane protein involved in Nodal signaling. Cell-associated CRIPTO acts as a Nodal coreceptor in cis. Shedding of CRIPTO by TMEM8A modulates Nodal signaling by allowing soluble CRIPTO to act as a Nodal coreceptor on other cells. Could play a role in the determination of the epiblastic cells that subsequently give rise to the mesoderm. The sequence is that of Protein Cripto from Homo sapiens (Human).